Here is a 183-residue protein sequence, read N- to C-terminus: Ribosome-recycling factor (183 aa).

It belongs to the RRF family.

The protein localises to the cytoplasm. Functionally, responsible for the release of ribosomes from messenger RNA at the termination of protein biosynthesis. May increase the efficiency of translation by recycling ribosomes from one round of translation to another. This chain is Ribosome-recycling factor, found in Mycoplasma mobile (strain ATCC 43663 / 163K / NCTC 11711) (Mesomycoplasma mobile).